The sequence spans 385 residues: AA13 family lytic polysaccharide monooxygenase aasA (385 aa).

An N-terminal signal peptide occupies residues 1 to 18 (MKSLLALVAGNLVTAVSG). His19 is a binding site for Cu(2+). At His19 the chain carries Methylhistidine. Positions 19–248 (HGYLTVPASR…AQVYLHCADI (230 aa)) are N-terminal catalytic module. 7 cysteine pairs are disulfide-bonded: Cys40-Cys43, Cys66-Cys245, Cys102-Cys203, Cys118-Cys145, Cys153-Cys161, Cys167-Cys173, and Cys181-Cys192. His109 provides a ligand contact to Cu(2+). An N-linked (GlcNAc...) asparagine glycan is attached at Asn120. Tyr242 provides a ligand contact to Cu(2+). The segment at 254–276 (SGSSPSPTSTTSTATSTTTPSST) is disordered. A compositionally biased stretch (low complexity) spans 256-276 (SSPSPTSTTSTATSTTTPSST). The CBM20 domain occupies 278-385 (CASAISIPVT…TTATESGAWR (108 aa)). N-linked (GlcNAc...) asparagine glycosylation is present at Asn364.

This sequence belongs to the polysaccharide monooxygenase AA13 family. The cofactor is Cu(2+). In terms of processing, the catalytically essential N-terminal histidine His-19 is post-translationally modified by methylation to prevent protonation of the histidine side chain, and protect the critical active site of the enzyme from oxidative damage.

The protein localises to the secreted. The catalysed reaction is starch + reduced acceptor + O2 = D-glucono-1,5-lactone-terminated malto-oligosaccharides + short-chain malto-oligosaccharides + acceptor + H2O.. Its function is as follows. Starch-active polysaccharide monooxygenase that oxidizes the C1 position of starch substrates, but not in cellulose, chitin, polygalacturonan or esterified pectin, nor with Arabidopsis stem cell walls. Catalysis by LPMOs requires the reduction of the active-site copper from Cu(II) to Cu(I) by a reducing agent and H(2)O(2) or O(2) as a cosubstrate. The sequence is that of AA13 family lytic polysaccharide monooxygenase aasA from Emericella nidulans (strain FGSC A4 / ATCC 38163 / CBS 112.46 / NRRL 194 / M139) (Aspergillus nidulans).